We begin with the raw amino-acid sequence, 359 residues long: 3-isopropylmalate dehydrogenase (359 aa).

76-89 contributes to the NAD(+) binding site; that stretch reads GPKWDTIERSIRPE. 4 residues coordinate substrate: Arg-96, Arg-106, Arg-134, and Asp-225. Mg(2+) is bound by residues Asp-225, Asp-249, and Asp-253. 283 to 295 contacts NAD(+); that stretch reads GSAPDIAGQNVAN.

This sequence belongs to the isocitrate and isopropylmalate dehydrogenases family. LeuB type 1 subfamily. In terms of assembly, homodimer. The cofactor is Mg(2+). Mn(2+) is required as a cofactor.

It localises to the cytoplasm. It catalyses the reaction (2R,3S)-3-isopropylmalate + NAD(+) = 4-methyl-2-oxopentanoate + CO2 + NADH. It functions in the pathway amino-acid biosynthesis; L-leucine biosynthesis; L-leucine from 3-methyl-2-oxobutanoate: step 3/4. Functionally, catalyzes the oxidation of 3-carboxy-2-hydroxy-4-methylpentanoate (3-isopropylmalate) to 3-carboxy-4-methyl-2-oxopentanoate. The product decarboxylates to 4-methyl-2 oxopentanoate. In Acinetobacter baylyi (strain ATCC 33305 / BD413 / ADP1), this protein is 3-isopropylmalate dehydrogenase.